We begin with the raw amino-acid sequence, 472 residues long: Carboxypeptidase Q (472 aa).

The signal sequence occupies residues 1-20 (MKFLIFAFFGGVHLLSLCSG). The propeptide occupies 21–44 (KAIYKNGISKRTFEEIKEEIASYG). Residues asparagine 61 and asparagine 179 are each glycosylated (N-linked (GlcNAc...) asparagine). Positions 290 and 302 each coordinate Zn(2+). Glutamate 336 (nucleophile) is an active-site residue. Glutamate 337 is a binding site for Zn(2+). N-linked (GlcNAc...) asparagine glycosylation is found at asparagine 353 and asparagine 356. Aspartate 364 is a binding site for Zn(2+). Asparagine 396 carries an N-linked (GlcNAc...) asparagine glycan. Histidine 434 contributes to the Zn(2+) binding site.

The protein belongs to the peptidase M28 family. As to quaternary structure, homodimer. The monomeric form is inactive while the homodimer is active. N-glycosylated. The secreted form is modified by hybrid or complex type oligosaccharide chains.

Its subcellular location is the endoplasmic reticulum. It localises to the golgi apparatus. It is found in the lysosome. The protein resides in the secreted. Its function is as follows. Carboxypeptidase that may play an important role in the hydrolysis of circulating peptides. Catalyzes the hydrolysis of dipeptides with unsubstituted terminals into amino acids. May play a role in the liberation of thyroxine hormone from its thyroglobulin (Tg) precursor. This is Carboxypeptidase Q (CPQ) from Pongo abelii (Sumatran orangutan).